The sequence spans 337 residues: Glyceraldehyde-3-phosphate dehydrogenase (337 aa).

Residues 12-13, Asp-34, and Lys-79 each bind NAD(+); that span reads RI. Residues 150-152, Thr-181, 210-211, and Arg-233 contribute to the D-glyceraldehyde 3-phosphate site; these read SCT and TG. The active-site Nucleophile is the Cys-151. Position 315 (Asn-315) interacts with NAD(+).

The protein belongs to the glyceraldehyde-3-phosphate dehydrogenase family. Homotetramer.

The protein localises to the cytoplasm. It carries out the reaction D-glyceraldehyde 3-phosphate + phosphate + NAD(+) = (2R)-3-phospho-glyceroyl phosphate + NADH + H(+). The protein operates within carbohydrate degradation; glycolysis; pyruvate from D-glyceraldehyde 3-phosphate: step 1/5. The sequence is that of Glyceraldehyde-3-phosphate dehydrogenase (GPD) from Schizophyllum commune (Split gill fungus).